The following is a 262-amino-acid chain: MKTTQYVARQPDDNGFIHYPETEHQVWNTLITRQLKVIEGRACQEYLDGIEQLGLPHERIPQLDEINRVLQATTGWRVARVPALIPFQTFFELLASQQFPVATFIRTPEELDYLQEPDIFHEIFGHCPLLTNPWFAEFTHTYGKLGLKASKEERVFLARLYWMTIEFGLVETDQGKRIYGGGILSSPKETVYSLSDEPLHQAFNPLEAMRTPYRIDILQPLYFVLPDLKRLFQLAQEDIMALVHEAMRLGLHAPLFPPKQAA.

3 residues coordinate Fe cation: His-121, His-126, and Glu-166.

It belongs to the biopterin-dependent aromatic amino acid hydroxylase family. In terms of assembly, monomer. Requires Fe(2+) as cofactor.

It carries out the reaction (6R)-L-erythro-5,6,7,8-tetrahydrobiopterin + L-phenylalanine + O2 = (4aS,6R)-4a-hydroxy-L-erythro-5,6,7,8-tetrahydrobiopterin + L-tyrosine. The protein operates within amino-acid degradation; L-phenylalanine degradation; acetoacetate and fumarate from L-phenylalanine: step 1/6. This is Phenylalanine-4-hydroxylase (phhA) from Pseudomonas aeruginosa (strain ATCC 15692 / DSM 22644 / CIP 104116 / JCM 14847 / LMG 12228 / 1C / PRS 101 / PAO1).